A 204-amino-acid chain; its full sequence is Putative AgrB-like protein (204 aa).

5 helical membrane passes run 51-73, 87-107, 111-131, 151-168, and 173-190; these read VYGIALVTGLLLQTVTVHLSYLW, LNCTLISLTMFVLAPFIFQNI, NWIVLGTFAFILLNMFLFAPA, AMIGTLILTGIALLIPFA, and LIMVGSLFQVISINPLTY.

The protein belongs to the AgrB family.

Its subcellular location is the cell membrane. Functionally, may be involved in the proteolytic processing of a quorum sensing system signal molecule precursor. This is Putative AgrB-like protein from Listeria innocua serovar 6a (strain ATCC BAA-680 / CLIP 11262).